A 22-amino-acid chain; its full sequence is Mu-conotoxin CnIIIA (22 aa).

Intrachain disulfides connect Cys3–Cys15, Cys4–Cys21, and Cys10–Cys22. Cys22 carries the cysteine amide modification.

This sequence belongs to the conotoxin M superfamily. As to expression, expressed by the venom duct. Has not been isolated from the crude venom.

Its subcellular location is the secreted. Its function is as follows. Mu-conotoxins block voltage-gated sodium channels (Nav). This synthetic toxin moderately blocks rNav1.1/SCN1A, rNav1.2/SCN2A, rNav1.3/SCN3A, rNav1.4/SCN4A, rNav1.5/SCN5A, and mNav1.6/SCN8A. This block is very slowly reversible. Causes seizures when injected intracranially into mice. The sequence is that of Mu-conotoxin CnIIIA from Conus consors (Singed cone).